Here is an 82-residue protein sequence, read N- to C-terminus: Protein C2 (82 aa).

This chain is Protein C2 (C2), found in Sterkiella nova (Ciliate).